Consider the following 438-residue polypeptide: 23S rRNA (uracil(1939)-C(5))-methyltransferase RlmD (438 aa).

The region spanning 8–68 (KQKTNNVQTI…RQYGHATAKK (61 aa)) is the TRAM domain. Residues C81, C87, C90, and C168 each coordinate [4Fe-4S] cluster. S-adenosyl-L-methionine contacts are provided by Q271, F300, N305, E321, D348, and D369. C395 (nucleophile) is an active-site residue.

The protein belongs to the class I-like SAM-binding methyltransferase superfamily. RNA M5U methyltransferase family. RlmD subfamily.

It carries out the reaction uridine(1939) in 23S rRNA + S-adenosyl-L-methionine = 5-methyluridine(1939) in 23S rRNA + S-adenosyl-L-homocysteine + H(+). Its function is as follows. Catalyzes the formation of 5-methyl-uridine at position 1939 (m5U1939) in 23S rRNA. This chain is 23S rRNA (uracil(1939)-C(5))-methyltransferase RlmD, found in Haemophilus influenzae (strain 86-028NP).